The primary structure comprises 336 residues: Phenylalanine--tRNA ligase alpha subunit (336 aa).

Glutamate 257 serves as a coordination point for Mg(2+).

It belongs to the class-II aminoacyl-tRNA synthetase family. Phe-tRNA synthetase alpha subunit type 1 subfamily. As to quaternary structure, tetramer of two alpha and two beta subunits. Mg(2+) is required as a cofactor.

The protein localises to the cytoplasm. It carries out the reaction tRNA(Phe) + L-phenylalanine + ATP = L-phenylalanyl-tRNA(Phe) + AMP + diphosphate + H(+). The chain is Phenylalanine--tRNA ligase alpha subunit from Xanthomonas campestris pv. campestris (strain 8004).